A 196-amino-acid polypeptide reads, in one-letter code: Glycerol-3-phosphate acyltransferase (196 aa).

A run of 5 helical transmembrane segments spans residues 4–24, 56–76, 80–100, 114–134, and 155–175; these read LTLT…AILV, ATVL…AYFL, SLYL…PIFF, TLLP…VLVV, and VYFL…LILF.

The protein belongs to the PlsY family. As to quaternary structure, probably interacts with PlsX.

It localises to the cell inner membrane. The catalysed reaction is an acyl phosphate + sn-glycerol 3-phosphate = a 1-acyl-sn-glycero-3-phosphate + phosphate. It functions in the pathway lipid metabolism; phospholipid metabolism. Functionally, catalyzes the transfer of an acyl group from acyl-phosphate (acyl-PO(4)) to glycerol-3-phosphate (G3P) to form lysophosphatidic acid (LPA). This enzyme utilizes acyl-phosphate as fatty acyl donor, but not acyl-CoA or acyl-ACP. The chain is Glycerol-3-phosphate acyltransferase from Colwellia psychrerythraea (strain 34H / ATCC BAA-681) (Vibrio psychroerythus).